The following is a 507-amino-acid chain: Rhamnogalacturonase A (507 aa).

The N-terminal stretch at 1–21 is a signal peptide; sequence MYVSRLLLFLAPLLVKGQLSG. Cys-38 and Cys-64 are oxidised to a cystine. The active-site Proton donor is Asp-215. The cysteines at positions 217 and 234 are disulfide-linked. Asn-235 is a glycosylation site (N-linked (GlcNAc...) asparagine). Residue His-290 is part of the active site. Asn-317 carries N-linked (GlcNAc...) asparagine glycosylation. Intrachain disulfides connect Cys-340–Cys-346 and Cys-368–Cys-377. Over residues 462–491 the composition is skewed to low complexity; the sequence is SPATSSPTATSTAISSVDPVSAATTTATSH. A disordered region spans residues 462–507; the sequence is SPATSSPTATSTAISSVDPVSAATTTATSHGHGKSHHKHQCRAHRH. Residues 492 to 507 are compositionally biased toward basic residues; that stretch reads GHGKSHHKHQCRAHRH.

Belongs to the glycosyl hydrolase 28 family.

Its subcellular location is the secreted. The enzyme catalyses Endohydrolysis of alpha-D-GalA-(1-&gt;2)-alpha-L-Rha glycosidic bond in the rhamnogalacturonan I backbone with initial inversion of anomeric configuration releasing oligosaccharides with beta-D-GalA at the reducing end.. In terms of biological role, pectinolytic enzymes consist of four classes of enzymes: pectine lyase, polygalacturonase, pectin methylesterase and rhamnogalacturonase. Hydrolyzes alpha-D-galacturonopyranosyl-(1,2)-alpha-L-rhamnopyranosyl linkages in the backbone of the hairy regions of pectins. Active against linseed rhamnogalacturonan. In Emericella nidulans (strain FGSC A4 / ATCC 38163 / CBS 112.46 / NRRL 194 / M139) (Aspergillus nidulans), this protein is Rhamnogalacturonase A (rhgA).